The primary structure comprises 399 residues: Accessory Sec system protein translocase subunit SecY2 (399 aa).

10 consecutive transmembrane segments (helical) span residues 14 to 34, 60 to 80, 102 to 122, 128 to 148, 152 to 172, 183 to 203, 237 to 257, 272 to 292, 335 to 355, and 362 to 382; these read IFFT…SIVS, LNIF…LTLI, ALTL…YINK, SNML…VWLA, TTYG…KSIF, ASLI…LFFI, ISIM…NFIG, FTNP…GYFL, WFGS…ALLV, and VYFT…AETI.

Belongs to the SecY/SEC61-alpha family. SecY2 subfamily. Component of the accessory SecA2/SecY2 protein translocase complex required to export cell wall proteins. May form heterotrimers with SecE and SecG subunits.

The protein localises to the cell membrane. Functionally, part of the accessory SecA2/SecY2 system specifically required for export of possible cell wall proteins. The central subunit of a protein translocation channel. The protein is Accessory Sec system protein translocase subunit SecY2 of Staphylococcus epidermidis (strain ATCC 12228 / FDA PCI 1200).